Consider the following 51-residue polypeptide: FVNQHLCGSHLVEALYLVCGERGFFYTPKAGIVEQCCASTCSLYQLENYCN.

3 disulfides stabilise this stretch: Cys-7–Cys-37, Cys-19–Cys-50, and Cys-36–Cys-41.

The protein belongs to the insulin family. In terms of assembly, heterodimer of a B chain and an A chain linked by two disulfide bonds.

The protein localises to the secreted. In terms of biological role, insulin decreases blood glucose concentration. It increases cell permeability to monosaccharides, amino acids and fatty acids. It accelerates glycolysis, the pentose phosphate cycle, and glycogen synthesis in liver. The chain is Insulin (INS) from Balaenoptera borealis (Sei whale).